A 289-amino-acid polypeptide reads, in one-letter code: Coiled-coil domain-containing protein 137 (289 aa).

Disordered stretches follow at residues 1–64, 149–184, and 204–225; these read MAGA…QEIP, EVQAAPKEKSEQKKAKKAFQKRRLDKVRRKKEEKAA, and QPPELTARPQRSVSKDQPGRRS. A compositionally biased stretch (low complexity) spans 7-20; sequence GAAVSRVQAGPGSP. Residue Ser19 is modified to Phosphoserine. A coiled-coil region spans residues 155-197; sequence KEKSEQKKAKKAFQKRRLDKVRRKKEEKAADRLEQELLRDTVK. The span at 162–177 shows a compositional bias: basic residues; the sequence is KAKKAFQKRRLDKVRR. Ser233 carries the phosphoserine modification. A coiled-coil region spans residues 247 to 273; sequence RQRIVEEERERAVQAYRALKQRQQQLH. Residues 265-289 are disordered; that stretch reads LKQRQQQLHGERPHLTSRKKPEPQL. A compositionally biased stretch (basic and acidic residues) spans 273–289; that stretch reads HGERPHLTSRKKPEPQL.

It localises to the chromosome. This chain is Coiled-coil domain-containing protein 137 (CCDC137), found in Homo sapiens (Human).